The following is a 191-amino-acid chain: Large ribosomal subunit protein bL9c (191 aa).

The N-terminal 35 residues, 1–35 (MASPSCASTLPWTAAAFSYPRRLQTRRAPSLVIVA), are a transit peptide targeting the chloroplast.

The protein belongs to the bacterial ribosomal protein bL9 family. As to quaternary structure, part of the 50S ribosomal subunit.

It localises to the plastid. The protein localises to the chloroplast. Functionally, binds to the 23S rRNA. The chain is Large ribosomal subunit protein bL9c (RPL9) from Triticum aestivum (Wheat).